A 325-amino-acid polypeptide reads, in one-letter code: MTITANKRHYLEKVSHQGIISALAFDQRGALKQMMAAHQEGEATVTQIETLKVLVSEELTPYASSILLDPEYGLLATKVRANQTGLLLAYEKTGYDATTTSRLPDCLVEWSVKRLKAAGADAIKFLLYYDVDGDEQINLQKQAYIERIGSECTAEDIPFFLELLSYDERISDNNSAAYAKLKPHKVNGAMSVFSDKRFGVDVLKVEVPVNMAYVEGFTEGEVHYSQAEAIKAFQDQEAASHLPYIYLSAGVSAKLFQETLYFAAAAGAQFSGVLCGRATWAGSVPVYITKGEDEARKWLCTEGFQNIDELNRVLEETASPWTEKI.

It belongs to the aldolase LacD family.

The enzyme catalyses D-tagatofuranose 1,6-bisphosphate = D-glyceraldehyde 3-phosphate + dihydroxyacetone phosphate. It functions in the pathway carbohydrate metabolism; D-tagatose 6-phosphate degradation; D-glyceraldehyde 3-phosphate and glycerone phosphate from D-tagatose 6-phosphate: step 2/2. The chain is Tagatose 1,6-diphosphate aldolase 1 (lacD1) from Streptococcus pyogenes serotype M1.